A 284-amino-acid chain; its full sequence is MTAHLIDGKAIAASLRQQIAQRVVERRQQGLRTPGLAVILVGTDPASQVYVSHKRKDCEEVGFISQAFDLPSETTQQALTELIDRLNDDPAVDGILLQLPLPAHLDASLLLERIRPDKDVDGFHPYNIGRLAQRIPLLRPCTPKGIMTLLESTGQDLYGMNAVIVGASNIVGRPMAMELLLAGCTVTVCHRFTKDLAGHVGRADLVVVAAGKPGLVKGEWVKEGAIVIDVGINRQEDGKLVGDVVYETALPRAGWITPVPGGVGPMTRACLLENTLYAAEELHK.

NADP(+) is bound by residues 166–168 and I232; that span reads GAS.

The protein belongs to the tetrahydrofolate dehydrogenase/cyclohydrolase family. Homodimer.

It catalyses the reaction (6R)-5,10-methylene-5,6,7,8-tetrahydrofolate + NADP(+) = (6R)-5,10-methenyltetrahydrofolate + NADPH. It carries out the reaction (6R)-5,10-methenyltetrahydrofolate + H2O = (6R)-10-formyltetrahydrofolate + H(+). It functions in the pathway one-carbon metabolism; tetrahydrofolate interconversion. Its function is as follows. Catalyzes the oxidation of 5,10-methylenetetrahydrofolate to 5,10-methenyltetrahydrofolate and then the hydrolysis of 5,10-methenyltetrahydrofolate to 10-formyltetrahydrofolate. The sequence is that of Bifunctional protein FolD 2 from Pseudomonas putida (strain ATCC 47054 / DSM 6125 / CFBP 8728 / NCIMB 11950 / KT2440).